Reading from the N-terminus, the 679-residue chain is Glycine--tRNA ligase beta subunit (679 aa).

It belongs to the class-II aminoacyl-tRNA synthetase family. In terms of assembly, tetramer of two alpha and two beta subunits.

It localises to the cytoplasm. It catalyses the reaction tRNA(Gly) + glycine + ATP = glycyl-tRNA(Gly) + AMP + diphosphate. In Streptococcus agalactiae serotype Ia (strain ATCC 27591 / A909 / CDC SS700), this protein is Glycine--tRNA ligase beta subunit.